Reading from the N-terminus, the 101-residue chain is MNSHFASAHTPFYINTKEGRYLVLKAVKVCDVRTVEFEGSKASCVLKVDKPSSPASERRPSSPSRCERMNNPGKQVPFMRTDMLQNMFAANRDNVASRLLS.

A disordered region spans residues 48-76; it reads VDKPSSPASERRPSSPSRCERMNNPGKQV. Phosphoserine occurs at positions 53 and 62. Basic and acidic residues predominate over residues 56-68; the sequence is SERRPSSPSRCER.

It belongs to the orthopoxvirus OPG062 family. Self-associates to form high molecular-weight forms. Interacts with protein OPG157. Interacts with host RICTOR and RPTOR; these interactions disrupt the mTORC1 and mTORC2 crosstalk. Post-translationally, phosphorylated on two serines. While these phosphorylations do not play a role in virion assembly; they are essential for the interaction with host RICTOR and RPTOR.

The protein localises to the virion. Plays an essential role in virion assembly and morphogenesis. Also plays a role in the inhibition of host immune response by dysregulating mTOR. Sequesters host RICTOR and RPTOR, thereby disrupting mTORC1 and mTORC2 crosstalk. In turn, blocks the host antiviral response in part through mTOR-dependent degradation of cGAS, the primary poxvirus sensor. The polypeptide is Phosphoprotein OPG062 (OPG062) (Variola virus (isolate Human/India/Ind3/1967) (VARV)).